The sequence spans 293 residues: MADEKKQLLIVTGMSGAGKTVVAHDLEDMGYFVVDNLPPTLLGSFWDLINNSNDFHKVAVVIDLRVKAFYTDLLDEVNSLEDNGNVQATILYLDASDDVLVARYKETRRLPPLANNGKGRLLDGIQEERRILTPIKNRSNYIVDTSNLSTKELKQKLINTFSDKKRQPFSIEVMSFGFKYGMPIDADIVMDVRFLPNPFYIPELRPFTGLDKRVFDYVMNKEETQVFYKKLLDMLETAIPGYIKEGKEKLTIAIGCTGGQHRSVSIAQQLARDLSKKYPVDITHREISRYIRK.

Residue 13-20 (GMSGAGKT) coordinates ATP. Residue 63-66 (DLRV) coordinates GTP.

Belongs to the RapZ-like family.

Functionally, displays ATPase and GTPase activities. This is Nucleotide-binding protein LBA0691 from Lactobacillus acidophilus (strain ATCC 700396 / NCK56 / N2 / NCFM).